The sequence spans 101 residues: Small ribosomal subunit protein bS18c (101 aa).

Over residues 1–19 (MDKSKQPFRKSKRSFRRRL) the composition is skewed to basic residues. Residues 1–26 (MDKSKQPFRKSKRSFRRRLPPIGSGD) form a disordered region.

Belongs to the bacterial ribosomal protein bS18 family. In terms of assembly, part of the 30S ribosomal subunit.

It is found in the plastid. The protein localises to the chloroplast. In Phalaenopsis aphrodite subsp. formosana (Moth orchid), this protein is Small ribosomal subunit protein bS18c.